We begin with the raw amino-acid sequence, 399 residues long: MNKNKIVLAYSGGLDTSVAIAWLKKDFDVIAVCMDVGEGKDLQFIHEKALKIGAIESYVIDVKEEFAEAFVLPALQAHAFYEQKYPLVSALSRPLISKKLVDIAHECGATYIAHGCTGKGNDQVRFEIAIAALDPTIEVIAPVRDWHWSREEEIAFAKENGVPIPADLDNPYSVDQNLWGRANECGVLENPWNQAPEEAYDMTVSPEEAPDRPEYIDITFEAGVPIALNGKVLSLANLIIELNQIAGAHGIGRIDHVENRLVGIKSREIYECPGAITLLAAHKEIEDLTFVREVSHFKPILENELSNLIYNGLWYNPATQAILSYLKETQKVVNGIAKVKLYKGHVQVVARQSDNSLYDENLATYTSADSFDQEAAIGFIKLWGLPTQVNAQVNKKGVV.

9–17 (AYSGGLDTS) is an ATP binding site. Tyr85 provides a ligand contact to L-citrulline. Residue Gly115 participates in ATP binding. Positions 117, 121, and 122 each coordinate L-aspartate. Asn121 serves as a coordination point for L-citrulline. Arg125, Ser173, Glu258, and Tyr270 together coordinate L-citrulline.

It belongs to the argininosuccinate synthase family. Type 1 subfamily. As to quaternary structure, homotetramer.

The protein localises to the cytoplasm. It carries out the reaction L-citrulline + L-aspartate + ATP = 2-(N(omega)-L-arginino)succinate + AMP + diphosphate + H(+). The protein operates within amino-acid biosynthesis; L-arginine biosynthesis; L-arginine from L-ornithine and carbamoyl phosphate: step 2/3. This is Argininosuccinate synthase from Streptococcus uberis (strain ATCC BAA-854 / 0140J).